Consider the following 275-residue polypeptide: MPQVTMRQMLEAGVHFGHQTRYWNPKLAPYIFGARGKIHIINLEKTVPLFNDAMNFLSSIAQKRGTVLFLGTKRSARESIKEEAERCNMPFMTQRWLGGTLTNFRTVKQSVARLKELEAAETDGTFEKLVKHEVLGLRREREKLDASLGGIKEMNRLPDAIFVIDIGHEDIAIKEAKKLGIPVIAVVDTNYDPALVDYAIPGNDDAIRAVQLYARAAADAVLEGKAAAPNSASVREEEFSAEAGDEGKGRRAPAKKATEKKADAPAAAPEAPAAE.

A disordered region spans residues 226 to 275; that stretch reads AAAPNSASVREEEFSAEAGDEGKGRRAPAKKATEKKADAPAAAPEAPAAE. The span at 264-275 shows a compositional bias: low complexity; it reads APAAAPEAPAAE.

Belongs to the universal ribosomal protein uS2 family.

In Xanthomonas campestris pv. campestris (strain ATCC 33913 / DSM 3586 / NCPPB 528 / LMG 568 / P 25), this protein is Small ribosomal subunit protein uS2.